The primary structure comprises 994 residues: Receptor-like protein 6 (994 aa).

A signal peptide spans 1 to 25 (MTGLYSSMSFFLRTIVLLFSTSSFC). Residues 26–946 (NTFASLTQDS…SSSSSSEEDE (921 aa)) are Extracellular-facing. Asn-116, Asn-134, and Asn-154 each carry an N-linked (GlcNAc...) asparagine glycan. 19 LRR repeats span residues 122–146 (LQHLQSVNLAYNNFTNSPIPAEFSK), 148–171 (MRLERLNLSRSSFSGHISIKLLQL), 174–199 (LVSLDLSSSFPYSPSSLSIEKPLFLH), 205–228 (FMNLRELDMSSVDISSAIPIEFSY), 230–253 (WSLRSLTLKGCNLLGRFPNSVLLI), 254–278 (PNLESISLDHNLNLEGSLPNFLRNN), 280–301 (LLKLSIYNTSFSGTIPNSISNL), 302–325 (KHLTSLKLQQSAFSGRIPSSLRSL), 326–349 (SHLSNLVLSENNFVGEIPSSVSNL), 350–373 (KQLTLFDVSDNNLNGNFPSSLLNL), 375–397 (QLRYIDICSNHFTGFLPPTISQL), 398–421 (SNLEFFSACDNSFTGSIPSSLFNI), 423–445 (SLTTLGLSYNQLNDTTNIKNISL), 446–471 (LHNLQRLLLDNNNFKASQVDLDVFLS), 477–497 (SLALSGIPLSTTNITSDSEFS), 498–520 (SHLEYLELSGCNIIEFPEFIRNQ), 521–544 (RNLSSIDLSNNNIKGQVPNWLWRL), 546–569 (ELSTVDLSNNSLIGFNGSLKALSG), and 571–595 (KIVMLDLSSNAFQGPLFMPPRGIQY). N-linked (GlcNAc...) asparagine glycosylation is found at Asn-277 and Asn-287. Asn-420, Asn-435, and Asn-442 each carry an N-linked (GlcNAc...) asparagine glycan. N-linked (GlcNAc...) asparagine glycosylation occurs at Asn-489. Residues Asn-522, Asn-554, and Asn-561 are each glycosylated (N-linked (GlcNAc...) asparagine). Residues 597 to 613 (LGSYNNFTGYIPPSICG) form an LRR 20; degenerate repeat. A glycan (N-linked (GlcNAc...) asparagine) is linked at Asn-602. 10 LRR repeats span residues 614-637 (LANPLILDLSNNNLHGLIPRCLEA), 639-663 (MSSLSVLNLRNNSLDGSLPNIFMNA), 665-687 (VLSSLDVSHNTLEGKLPASLAGC), 689-710 (ALEILNVESNNINDTFPFWLNS), 711-737 (LPKLQVLVLRSNNFRGTLHNVDGVWFG), 739-762 (PLLRITDVSHNDFVGTLPSDYFMN), 803-827 (LTKYTVIDFAGNKIQGKIPESVGIL), 828-851 (KELHVLNLSSNAFTGHIPSSLANL), 852-875 (TNLESLDISQNKIGGEIPPELGTL), and 877-900 (SLEWINVSHNQLVGSIPQGTQFHR). Residue Asn-649 is glycosylated (N-linked (GlcNAc...) asparagine). Asn-701 carries an N-linked (GlcNAc...) asparagine glycan. Asn-762 is a glycosylation site (N-linked (GlcNAc...) asparagine). 2 N-linked (GlcNAc...) asparagine glycosylation sites follow: Asn-834 and Asn-850. Residues Asn-882 and Asn-902 are each glycosylated (N-linked (GlcNAc...) asparagine). The helical transmembrane segment at 947-967 (LISWIAACLGFAPGMVFGLTM) threads the bilayer. Residues 968-994 (GYIMTSHKHEWFMDTFGRRKGRSTRTR) are Cytoplasmic-facing.

It belongs to the RLP family.

The protein resides in the cell membrane. The chain is Receptor-like protein 6 from Arabidopsis thaliana (Mouse-ear cress).